The primary structure comprises 299 residues: Putative pyrroline-5-carboxylate reductase 4 (299 aa).

This sequence belongs to the pyrroline-5-carboxylate reductase family.

The enzyme catalyses L-proline + NADP(+) = (S)-1-pyrroline-5-carboxylate + NADPH + 2 H(+). The catalysed reaction is L-proline + NAD(+) = (S)-1-pyrroline-5-carboxylate + NADH + 2 H(+). It participates in amino-acid biosynthesis; L-proline biosynthesis; L-proline from L-glutamate 5-semialdehyde: step 1/1. The sequence is that of Putative pyrroline-5-carboxylate reductase 4 from Caenorhabditis elegans.